We begin with the raw amino-acid sequence, 182 residues long: Isopentenyl-diphosphate Delta-isomerase (182 aa).

His-23 and His-30 together coordinate Mn(2+). One can recognise a Nudix hydrolase domain in the interval 28 to 162 (PRHLAFSCHV…PWAFSPWLVE (135 aa)). Residue Cys-65 is part of the active site. Cys-65 contributes to the Mg(2+) binding site. His-67 contacts Mn(2+). Glu-85 contributes to the Mg(2+) binding site. Mn(2+) is bound by residues Glu-112 and Glu-114. The active site involves Glu-114.

The protein belongs to the IPP isomerase type 1 family. The cofactor is Mg(2+). Requires Mn(2+) as cofactor.

Its subcellular location is the cytoplasm. The catalysed reaction is isopentenyl diphosphate = dimethylallyl diphosphate. It functions in the pathway isoprenoid biosynthesis; dimethylallyl diphosphate biosynthesis; dimethylallyl diphosphate from isopentenyl diphosphate: step 1/1. In terms of biological role, catalyzes the 1,3-allylic rearrangement of the homoallylic substrate isopentenyl (IPP) to its highly electrophilic allylic isomer, dimethylallyl diphosphate (DMAPP). The protein is Isopentenyl-diphosphate Delta-isomerase of Brevibacterium linens.